Consider the following 149-residue polypeptide: Protein E6 (149 aa).

Zinc fingers lie at residues cysteine 30–cysteine 66 and cysteine 103–cysteine 139. Residues threonine 147–valine 149 carry the PDZ-binding domain motif.

Belongs to the papillomaviridae E6 protein family. In terms of assembly, forms homodimers. Interacts with ubiquitin-protein ligase UBE3A/E6-AP and thus forms a complex with human TP53. Interacts with human NFX1 and MAGI3. Interacts with human IRF3; this interaction inhibits the establishment of antiviral state. Interacts with human TYK2; this interaction inhibits JAK-STAT activation by interferon alpha. Interacts with host DLG1; this interaction leads to the proteasomal degradation of DLG1.

Its subcellular location is the host cytoplasm. It is found in the host nucleus. Functionally, this protein may be involved in the oncogenic potential of this virus (associated with cancer of the uterine cervix). Its function is as follows. Plays a major role in the induction and maintenance of cellular transformation. Acts mainly as an oncoprotein by stimulating the destruction of many host cell key regulatory proteins. E6 associates with host UBE3A/E6-AP ubiquitin-protein ligase, and inactivates tumor suppressors TP53 and TP73 by targeting them to the 26S proteasome for degradation. In turn, DNA damage and chromosomal instabilities increase and lead to cell proliferation and cancer development. The complex E6/E6AP targets several other substrates to degradation via the proteasome including host DLG1 or NFX1, a repressor of human telomerase reverse transcriptase (hTERT). The resulting increased expression of hTERT prevents the shortening of telomere length leading to cell immortalization. Other cellular targets including BAK1, Fas-associated death domain-containing protein (FADD) and procaspase 8, are degraded by E6/E6AP causing inhibition of apoptosis. E6 also inhibits immune response by interacting with host IRF3 and TYK2. These interactions prevent IRF3 transcriptional activities and inhibit TYK2-mediated JAK-STAT activation by interferon alpha resulting in inhibition of the interferon signaling pathway. This chain is Protein E6, found in Human papillomavirus 35.